The chain runs to 176 residues: MDQQVKQERLQGRLEPEIKEFRQERKTLQLATVDAQGRPNVSYAPFVQNQEGYFVLISHIARHARNLEVNPQVSIMMIEDETEAKQLFARKRLTFDAVASMVERDSELWCQVIAQMGERFGEIIDGLSQLQDFMLFRLQPEQGLFVKGFGQAYQVSGDDLVDFVHLEEGHRKISNG.

Histidine 170 is a binding site for heme.

Belongs to the heme oxygenase HugZ/HutZ family. As to quaternary structure, homodimer. Interacts with HutX, leading to the transfer of the heme from HutX to apo-HutZ.

The enzyme catalyses heme b + 3 AH2 + 3 O2 + 2 H(+) = biliverdin IXbeta + CO + Fe(2+) + 3 A + 3 H2O. It catalyses the reaction heme b + 3 AH2 + 3 O2 + 3 H(+) = biliverdin IXdelta + CO + Fe(2+) + 3 A + 3 H2O. With respect to regulation, activity is pH-dependent. A proximal hydrogen bond between Asp-132 and the heme axial ligant His-170 is essential for heme degradation activity. Heme-degradation reaction is inhibited by iron chelators. Functionally, involved in heme degradation. Catalyzes the degradation of heme to biliverdin, with the release of iron. Forms biliverdin beta and delta. Binds heme with high efficiency. The chain is Heme oxygenase HutZ from Vibrio cholerae serotype O1 (strain ATCC 39315 / El Tor Inaba N16961).